The chain runs to 57 residues: Large ribosomal subunit protein bL32 (57 aa).

Belongs to the bacterial ribosomal protein bL32 family.

This chain is Large ribosomal subunit protein bL32, found in Bacillus anthracis (strain A0248).